Consider the following 525-residue polypeptide: Ent-kaurene oxidase (525 aa).

A helical membrane pass occupies residues 31 to 51; the sequence is VHWLIYVAFGAWLCSYVIHVL. Residue cysteine 466 participates in heme binding.

This sequence belongs to the cytochrome P450 family. It depends on heme as a cofactor.

It localises to the membrane. It carries out the reaction ent-kaur-16-ene + 3 reduced [NADPH--hemoprotein reductase] + 3 O2 = ent-kaur-16-en-19-oate + 3 oxidized [NADPH--hemoprotein reductase] + 4 H2O + 4 H(+). The protein operates within plant hormone biosynthesis; gibberellin biosynthesis. Catalyzes three successive oxidations of the 4-methyl group of ent-kaurene giving kaurenoic acid, a key step in gibberellin (GA) biosynthesis. The protein is Ent-kaurene oxidase (CYP503A1) of Gibberella intermedia (Bulb rot disease fungus).